Reading from the N-terminus, the 35-residue chain is Pheromone-binding protein 2 (35 aa).

Belongs to the PBP/GOBP family. In terms of assembly, homodimer. In terms of tissue distribution, antenna.

This major soluble protein in olfactory sensilla of male moths might serve to solubilize the extremely hydrophobic pheromone molecules and to transport pheromone through the aqueous lymph to receptors located on olfactory cilia. The chain is Pheromone-binding protein 2 from Lymantria dispar (Gypsy moth).